Consider the following 219-residue polypeptide: Melanoma-associated antigen H1 (219 aa).

Positions 1 to 13 are enriched in basic residues; it reads MPRGRKSRRRRNA. Residues 1-84 are disordered; that stretch reads MPRGRKSRRR…QKPSVPRSNF (84 aa). The region spanning 1–198 is the MAGE domain; it reads MPRGRKSRRR…KDWPCNYDWD (198 aa). Acidic residues predominate over residues 44-57; sequence PEDDLSGPEEDPST. The span at 58-74 shows a compositional bias: low complexity; sequence PEEASTTPEEASSTAQA. Y195 is modified (phosphotyrosine).

The chain is Melanoma-associated antigen H1 (MAGEH1) from Homo sapiens (Human).